Consider the following 144-residue polypeptide: Ribosome-binding factor A (144 aa).

The disordered stretch occupies residues 121–144 (KAQTGVEEPLENTAEGEENPSGGE). A compositionally biased stretch (acidic residues) spans 128-138 (EPLENTAEGEE).

The protein belongs to the RbfA family. As to quaternary structure, monomer. Binds 30S ribosomal subunits, but not 50S ribosomal subunits or 70S ribosomes.

It is found in the cytoplasm. Functionally, one of several proteins that assist in the late maturation steps of the functional core of the 30S ribosomal subunit. Associates with free 30S ribosomal subunits (but not with 30S subunits that are part of 70S ribosomes or polysomes). Required for efficient processing of 16S rRNA. May interact with the 5'-terminal helix region of 16S rRNA. The sequence is that of Ribosome-binding factor A from Synechococcus sp. (strain JA-2-3B'a(2-13)) (Cyanobacteria bacterium Yellowstone B-Prime).